The primary structure comprises 336 residues: tRNA N6-adenosine threonylcarbamoyltransferase (336 aa).

Fe cation is bound by residues His-111 and His-115. Substrate-binding positions include Val-134–Gly-138, Asp-167, Gly-180, Asp-184, and Asn-272. A Fe cation-binding site is contributed by Asp-300.

The protein belongs to the KAE1 / TsaD family. Requires Fe(2+) as cofactor.

Its subcellular location is the cytoplasm. It catalyses the reaction L-threonylcarbamoyladenylate + adenosine(37) in tRNA = N(6)-L-threonylcarbamoyladenosine(37) in tRNA + AMP + H(+). Functionally, required for the formation of a threonylcarbamoyl group on adenosine at position 37 (t(6)A37) in tRNAs that read codons beginning with adenine. Is involved in the transfer of the threonylcarbamoyl moiety of threonylcarbamoyl-AMP (TC-AMP) to the N6 group of A37, together with TsaE and TsaB. TsaD likely plays a direct catalytic role in this reaction. The protein is tRNA N6-adenosine threonylcarbamoyltransferase of Caldicellulosiruptor bescii (strain ATCC BAA-1888 / DSM 6725 / KCTC 15123 / Z-1320) (Anaerocellum thermophilum).